A 417-amino-acid polypeptide reads, in one-letter code: UDP-N-acetylglucosamine 1-carboxyvinyltransferase (417 aa).

22–23 serves as a coordination point for phosphoenolpyruvate; it reads KN. R92 is a UDP-N-acetyl-alpha-D-glucosamine binding site. The Proton donor role is filled by C116. At C116 the chain carries 2-(S-cysteinyl)pyruvic acid O-phosphothioketal. UDP-N-acetyl-alpha-D-glucosamine contacts are provided by D304 and V326.

The protein belongs to the EPSP synthase family. MurA subfamily.

Its subcellular location is the cytoplasm. It catalyses the reaction phosphoenolpyruvate + UDP-N-acetyl-alpha-D-glucosamine = UDP-N-acetyl-3-O-(1-carboxyvinyl)-alpha-D-glucosamine + phosphate. It functions in the pathway cell wall biogenesis; peptidoglycan biosynthesis. Functionally, cell wall formation. Adds enolpyruvyl to UDP-N-acetylglucosamine. The protein is UDP-N-acetylglucosamine 1-carboxyvinyltransferase of Syntrophotalea carbinolica (strain DSM 2380 / NBRC 103641 / GraBd1) (Pelobacter carbinolicus).